Consider the following 233-residue polypeptide: Probable O-methyltransferase Rv1703c (233 aa).

Residues V55, E77, 79–80 (GT), and E102 contribute to the S-adenosyl-L-methionine site. D157 is an a divalent metal cation binding site. D159 is an S-adenosyl-L-methionine binding site. A divalent metal cation-binding residues include D185 and N186.

Belongs to the class I-like SAM-binding methyltransferase superfamily. Cation-dependent O-methyltransferase family.

In terms of biological role, specifically methylates an O atom of its substrate. The sequence is that of Probable O-methyltransferase Rv1703c from Mycobacterium tuberculosis (strain ATCC 25618 / H37Rv).